The chain runs to 92 residues: YcgL domain-containing protein Sama_1929 (92 aa).

The YcgL domain occupies 1-85 (MICAVYKSSR…PKDNLLTQHR (85 aa)).

The polypeptide is YcgL domain-containing protein Sama_1929 (Shewanella amazonensis (strain ATCC BAA-1098 / SB2B)).